Here is a 302-residue protein sequence, read N- to C-terminus: Glutaminase (302 aa).

Positions 61, 111, 155, 162, 186, 238, and 256 each coordinate substrate.

This sequence belongs to the glutaminase family. In terms of assembly, homotetramer.

It catalyses the reaction L-glutamine + H2O = L-glutamate + NH4(+). This is Glutaminase from Pseudomonas paraeruginosa (strain DSM 24068 / PA7) (Pseudomonas aeruginosa (strain PA7)).